The following is a 473-amino-acid chain: Putative amidase AmiC (473 aa).

Residues Lys82 and Ser157 each act as charge relay system in the active site. Ser181 serves as the catalytic Acyl-ester intermediate.

Belongs to the amidase family.

The enzyme catalyses a monocarboxylic acid amide + H2O = a monocarboxylate + NH4(+). This Mycobacterium bovis (strain ATCC BAA-935 / AF2122/97) protein is Putative amidase AmiC (amiC).